The sequence spans 530 residues: 5-aminolevulinate synthase, mitochondrial (530 aa).

The transit peptide at 1–26 (MFRPVLKVRPSFSYPYSIVSSRSVRL) directs the protein to the mitochondrion. Positions 73, 186, and 205 each coordinate substrate. Pyridoxal 5'-phosphate-binding residues include Ser238, His266, and Thr316. Lys319 is a catalytic residue. Lys319 carries the post-translational modification N6-(pyridoxal phosphate)lysine. Positions 348 and 349 each coordinate pyridoxal 5'-phosphate. Thr434 is a substrate binding site.

It belongs to the class-II pyridoxal-phosphate-dependent aminotransferase family. Homodimer. The cofactor is pyridoxal 5'-phosphate.

The protein resides in the mitochondrion matrix. The catalysed reaction is succinyl-CoA + glycine + H(+) = 5-aminolevulinate + CO2 + CoA. The protein operates within porphyrin-containing compound metabolism; protoporphyrin-IX biosynthesis; 5-aminolevulinate from glycine: step 1/1. Its function is as follows. Catalyzes the synthesis of 5-aminolevulinate (ALA) from succinyl-CoA and glycine, the first and rate-limiting step in heme biosynthesis. This Candida glabrata (strain ATCC 2001 / BCRC 20586 / JCM 3761 / NBRC 0622 / NRRL Y-65 / CBS 138) (Yeast) protein is 5-aminolevulinate synthase, mitochondrial (HEM1).